The sequence spans 132 residues: Small ribosomal subunit protein uS8c (132 aa).

This sequence belongs to the universal ribosomal protein uS8 family. In terms of assembly, part of the 30S ribosomal subunit.

It localises to the plastid. Its subcellular location is the chloroplast. Functionally, one of the primary rRNA binding proteins, it binds directly to 16S rRNA central domain where it helps coordinate assembly of the platform of the 30S subunit. The sequence is that of Small ribosomal subunit protein uS8c (rps8) from Nandina domestica (Heavenly bamboo).